The sequence spans 245 residues: 1-(5-phosphoribosyl)-5-[(5-phosphoribosylamino)methylideneamino] imidazole-4-carboxamide isomerase (245 aa).

Asp-7 (proton acceptor) is an active-site residue. The active-site Proton donor is the Asp-129.

Belongs to the HisA/HisF family.

The protein resides in the cytoplasm. The enzyme catalyses 1-(5-phospho-beta-D-ribosyl)-5-[(5-phospho-beta-D-ribosylamino)methylideneamino]imidazole-4-carboxamide = 5-[(5-phospho-1-deoxy-D-ribulos-1-ylimino)methylamino]-1-(5-phospho-beta-D-ribosyl)imidazole-4-carboxamide. It participates in amino-acid biosynthesis; L-histidine biosynthesis; L-histidine from 5-phospho-alpha-D-ribose 1-diphosphate: step 4/9. This Psychromonas ingrahamii (strain DSM 17664 / CCUG 51855 / 37) protein is 1-(5-phosphoribosyl)-5-[(5-phosphoribosylamino)methylideneamino] imidazole-4-carboxamide isomerase.